The sequence spans 313 residues: Aspartate carbamoyltransferase catalytic subunit (313 aa).

Residues arginine 58 and threonine 59 each coordinate carbamoyl phosphate. Lysine 86 provides a ligand contact to L-aspartate. Arginine 108, histidine 136, and glutamine 139 together coordinate carbamoyl phosphate. L-aspartate is bound by residues arginine 169 and arginine 223. Carbamoyl phosphate is bound by residues glycine 264 and proline 265.

It belongs to the aspartate/ornithine carbamoyltransferase superfamily. ATCase family. Heterododecamer (2C3:3R2) of six catalytic PyrB chains organized as two trimers (C3), and six regulatory PyrI chains organized as three dimers (R2).

The enzyme catalyses carbamoyl phosphate + L-aspartate = N-carbamoyl-L-aspartate + phosphate + H(+). Its pathway is pyrimidine metabolism; UMP biosynthesis via de novo pathway; (S)-dihydroorotate from bicarbonate: step 2/3. Functionally, catalyzes the condensation of carbamoyl phosphate and aspartate to form carbamoyl aspartate and inorganic phosphate, the committed step in the de novo pyrimidine nucleotide biosynthesis pathway. In Chlorobium luteolum (strain DSM 273 / BCRC 81028 / 2530) (Pelodictyon luteolum), this protein is Aspartate carbamoyltransferase catalytic subunit.